Here is a 275-residue protein sequence, read N- to C-terminus: Putative hydro-lyase SPO1111 (275 aa).

It belongs to the D-glutamate cyclase family.

This Ruegeria pomeroyi (strain ATCC 700808 / DSM 15171 / DSS-3) (Silicibacter pomeroyi) protein is Putative hydro-lyase SPO1111.